The following is a 254-amino-acid chain: tRNA 2'-phosphotransferase 1 (254 aa).

The residue at position 1 (Met-1) is an N-acetylmethionine. Disordered stretches follow at residues 1-30 (MNSFGGRRRETAGPKGRRAHRPPQDQDRDV) and 225-254 (RKPLSLAGNEEKEHQRDSKHSSRGRGMTQQ). Basic and acidic residues predominate over residues 233 to 244 (NEEKEHQRDSKH).

Belongs to the KptA/TPT1 family.

It catalyses the reaction 2'-phospho-[ligated tRNA] + NAD(+) = mature tRNA + ADP-alpha-D-ribose 1'',2''-cyclic phosphate + nicotinamide. Catalyzes the last step of tRNA splicing, the transfer of the splice junction 2'-phosphate from ligated tRNA to NAD to produce ADP-ribose 1''-2'' cyclic phosphate. The protein is tRNA 2'-phosphotransferase 1 (TRPT1) of Bos taurus (Bovine).